A 240-amino-acid polypeptide reads, in one-letter code: MATLFIADLHLCVEEPAITAGFLRFLAGEARKADALYILGDLFEAWIGDDDPNPLHRQMAAAIKAVSDSGVPCYFIHGNRDFLLGKRFARESGMTLLPEEKVLELYGRRVLIMHGDTLCTDDAGYQAFRTKVHKPWLQTLFLALPLFVRKRIAVRMRANSKEANSSKSLAIMDVNQNAVVSAMEKHQVQWLIHGHTHRPAVHELIANQQPAFRVVLGAWHTEGSMVKVTADDVELIHFPF.

Mn(2+)-binding residues include D8, H10, D41, N79, and H114. Residue 79–80 (NR) participates in substrate binding. D122, S160, N164, K167, and H195 together coordinate substrate. 2 residues coordinate Mn(2+): H195 and H197.

The protein belongs to the LpxH family. Mn(2+) serves as cofactor.

It localises to the cell inner membrane. It carries out the reaction UDP-2-N,3-O-bis[(3R)-3-hydroxytetradecanoyl]-alpha-D-glucosamine + H2O = 2-N,3-O-bis[(3R)-3-hydroxytetradecanoyl]-alpha-D-glucosaminyl 1-phosphate + UMP + 2 H(+). It functions in the pathway glycolipid biosynthesis; lipid IV(A) biosynthesis; lipid IV(A) from (3R)-3-hydroxytetradecanoyl-[acyl-carrier-protein] and UDP-N-acetyl-alpha-D-glucosamine: step 4/6. Its function is as follows. Hydrolyzes the pyrophosphate bond of UDP-2,3-diacylglucosamine to yield 2,3-diacylglucosamine 1-phosphate (lipid X) and UMP by catalyzing the attack of water at the alpha-P atom. Involved in the biosynthesis of lipid A, a phosphorylated glycolipid that anchors the lipopolysaccharide to the outer membrane of the cell. This Escherichia coli O157:H7 protein is UDP-2,3-diacylglucosamine hydrolase.